The sequence spans 461 residues: Ufm1-specific protease 2 (461 aa).

Active-site residues include cysteine 294, aspartate 418, and histidine 420.

This sequence belongs to the peptidase C78 family. Expressed at high level in brain, kidney, stomach, skeletal muscle, liver, pancreas, spleen and testis.

It is found in the endoplasmic reticulum. Its subcellular location is the cytoplasm. The protein localises to the nucleus. In terms of biological role, thiol-dependent isopeptidase that specifically cleaves UFM1, a ubiquitin-like modifier protein, from conjugated proteins, such as CD274/PD-L1, CYB5R3, DDRGK1, MRE11, RPL26/uL24, TRIP4 and RPL26/uL24. While it is also able to mediate the processing of UFM1 precursors, a prerequisite for conjugation reactions, UFSP2 mainly acts as a protein deUFMylase that mediates deconjugation of UFM1 from target proteins. Mediates deUFMylation of RPL26/uL24, a critical step to release the UFM1 ribosome E3 ligase (UREL) complex during the recycling of 60S ribosome subunits from the endoplasmic reticulum. Catalyzes deUFMylation of TRIP4, regulating intracellular nuclear receptors transactivation and thereby regulate cell proliferation and differentiation. The protein is Ufm1-specific protease 2 of Mus musculus (Mouse).